The chain runs to 301 residues: Acetyl-coenzyme A carboxylase carboxyl transferase subunit beta (301 aa).

A CoA carboxyltransferase N-terminal domain is found at 25-294 (LWIKCPETGE…SAANDMNGGA (270 aa)).

Belongs to the AccD/PCCB family. As to quaternary structure, acetyl-CoA carboxylase is a heterohexamer composed of biotin carboxyl carrier protein (AccB), biotin carboxylase (AccC) and two subunits each of ACCase subunit alpha (AccA) and ACCase subunit beta (AccD).

It localises to the cytoplasm. It catalyses the reaction N(6)-carboxybiotinyl-L-lysyl-[protein] + acetyl-CoA = N(6)-biotinyl-L-lysyl-[protein] + malonyl-CoA. It participates in lipid metabolism; malonyl-CoA biosynthesis; malonyl-CoA from acetyl-CoA: step 1/1. Functionally, component of the acetyl coenzyme A carboxylase (ACC) complex. Biotin carboxylase (BC) catalyzes the carboxylation of biotin on its carrier protein (BCCP) and then the CO(2) group is transferred by the transcarboxylase to acetyl-CoA to form malonyl-CoA. The sequence is that of Acetyl-coenzyme A carboxylase carboxyl transferase subunit beta from Rhizobium etli (strain CIAT 652).